Here is a 1690-residue protein sequence, read N- to C-terminus: Collagen alpha-4(IV) chain (1690 aa).

Positions 1-38 are cleaved as a signal peptide; that stretch reads MWSLHIVLMRCSFRLTKSLATGPWSLILILFSVQYVYG. Residues 39–64 form a 7S domain region; it reads SGKKYIGPCGGRDCSVCHCVPEKGSR. Disordered regions lie at residues 61–173 and 187–258; these read KGSR…GEKG and GDRG…GPTL. The triple-helical region stretch occupies residues 65–1459; that stretch reads GPPGPPGPQG…IGDPGPKGFG (1395 aa). A compositionally biased stretch (pro residues) spans 66 to 75; sequence PPGPPGPQGP. Residues 76–88 show a composition bias toward low complexity; the sequence is IGPLGAPGPIGLS. A Cell attachment site motif is present at residues 94–96; that stretch reads RGD. N142 is a glycosylation site (N-linked (GlcNAc...) asparagine). A Cell attachment site motif is present at residues 145 to 147; it reads RGD. Gly residues predominate over residues 149–164; it reads GFPGGRGALGPGGPLG. The short motif at 189–191 is the Cell attachment site element; it reads RGD. Positions 199–208 are enriched in gly residues; the sequence is GSWGAGGPAG. The Cell attachment site signature appears at 310-312; it reads RGD. 3 disordered regions span residues 369-390, 405-451, and 469-1457; these read PGDP…PGPP, GPPG…GLQG, and GIKG…GPKG. Low complexity predominate over residues 412 to 434; that stretch reads FPGLPGLPGEAGIPGRPDSAPGK. Pro residues-rich tracts occupy residues 498–507 and 529–540; these read PMGPPGPPGL and PGPPGAEGPPGL. Residues 586–607 are compositionally biased toward basic and acidic residues; the sequence is HGRDGHAGEKGDPGPPGDHEDA. Residues 644 to 655 show a composition bias toward low complexity; that stretch reads PGVPGHPGVRGP. Residue N669 is glycosylated (N-linked (GlcNAc...) asparagine). A compositionally biased stretch (pro residues) spans 681 to 690; that stretch reads FDGPPGPKGF. Short sequence motifs (cell attachment site) lie at residues 724–726 and 785–787; these read RGD. Over residues 849-858 the composition is skewed to gly residues; the sequence is GAPGGKGQPG. 2 stretches are compositionally biased toward low complexity: residues 866 to 880 and 907 to 917; these read AGMK…RPGA and PRGLPGFPGFP. Residues 989–991 carry the Cell attachment site motif; it reads RGD. The span at 1023-1032 shows a compositional bias: pro residues; sequence PGPPGPPGPP. Positions 1108–1117 are enriched in low complexity; it reads PGIQGPRGSP. Positions 1119 to 1131 are enriched in pro residues; that stretch reads RPGPPGSSGPPGC. Residues 1212 to 1214 carry the Cell attachment site motif; sequence RGD. 5 stretches are compositionally biased toward pro residues: residues 1220–1243, 1256–1280, 1297–1309, 1338–1353, and 1443–1452; these read ISPP…PPGP, DPGP…PPGL, PGPP…PGPP, FPGP…PPGR, and GPGPPGPIGD. One can recognise a Collagen IV NC1 domain in the interval 1465-1690; it reads GFLLVLHSQT…SRCQVCVKYS (226 aa). Cystine bridges form between C1480–C1569, C1513–C1566, C1525–C1531, C1588–C1686, C1622–C1683, and C1634–C1641.

It belongs to the type IV collagen family. There are six type IV collagen isoforms, alpha 1(IV)-alpha 6(IV), each of which can form a triple helix structure with 2 other chains to generate type IV collagen network. The alpha 3(IV) chain forms a triple helical protomer with alpha 4(IV) and alpha 5(IV); this triple helical structure dimerizes through NC1-NC1 domain interactions such that the alpha 3(IV), alpha 4(IV) and alpha 5(IV) chains of one protomer connect with the alpha 5(IV), alpha 4(IV) and alpha 3(IV) chains of the opposite protomer, respectively. Associates with LAMB2 at the neuromuscular junction and in GBM. In terms of processing, prolines at the third position of the tripeptide repeating unit (G-X-Y) are hydroxylated in some or all of the chains. Type IV collagens contain numerous cysteine residues which are involved in inter- and intramolecular disulfide bonding. 12 of these, located in the NC1 domain, are conserved in all known type IV collagens. Post-translationally, the trimeric structure of the NC1 domains is stabilized by covalent bonds between Lys and Met residues. In terms of tissue distribution, expressed in Bruch's membrane, outer plexiform layer, inner nuclear layer, inner plexiform layer, ganglion cell layer, inner limiting membrane and around the blood vessels of the retina (at protein level). Alpha 3 and alpha 4 type IV collagens are colocalized and present in kidney, eye, basement membranes of lens capsule, cochlea, lung, skeletal muscle, aorta, synaptic fibers, fetal kidney and fetal lung. PubMed:8083201 reports similar levels of expression of alpha 3 and alpha 4 type IV collagens in kidney, but PubMed:7523402 reports that in kidney levels of alpha 3 type IV collagen are significantly lower than those of alpha 4 type IV collagen. Highest levels of expression of alpha 4 type IV collagen are detected in kidney, calvaria, neuroretina and cardiac muscle. Lower levels of expression are observed in brain, lung and thymus, and no expression is detected in choroid plexus, liver, adrenal, pancreas, ileum or skin.

The protein resides in the secreted. The protein localises to the extracellular space. Its subcellular location is the extracellular matrix. It localises to the basement membrane. Type IV collagen is the major structural component of glomerular basement membranes (GBM), forming a 'chicken-wire' meshwork together with laminins, proteoglycans and entactin/nidogen. The protein is Collagen alpha-4(IV) chain (COL4A4) of Homo sapiens (Human).